The following is a 219-amino-acid chain: Probable GTP-binding protein EngB (219 aa).

The 184-residue stretch at Val-24 to Pro-207 folds into the EngB-type G domain. GTP contacts are provided by residues Gly-32–Ser-39, Gly-59–His-63, Asp-81–Gly-84, Thr-148–Asp-151, and Phe-186–Ala-188. Ser-39 and Thr-61 together coordinate Mg(2+).

The protein belongs to the TRAFAC class TrmE-Era-EngA-EngB-Septin-like GTPase superfamily. EngB GTPase family. Requires Mg(2+) as cofactor.

Functionally, necessary for normal cell division and for the maintenance of normal septation. This chain is Probable GTP-binding protein EngB, found in Burkholderia multivorans (strain ATCC 17616 / 249).